The chain runs to 70 residues: ATP synthase subunit c (70 aa).

Transmembrane regions (helical) follow at residues 4 to 24 (IAAG…DGIV) and 47 to 67 (FIGV…SLLV).

Belongs to the ATPase C chain family. In terms of assembly, F-type ATPases have 2 components, F(1) - the catalytic core - and F(0) - the membrane proton channel. F(1) has five subunits: alpha(3), beta(3), gamma(1), delta(1), epsilon(1). F(0) has three main subunits: a(1), b(2) and c(10-14). The alpha and beta chains form an alternating ring which encloses part of the gamma chain. F(1) is attached to F(0) by a central stalk formed by the gamma and epsilon chains, while a peripheral stalk is formed by the delta and b chains.

The protein resides in the cell membrane. Functionally, f(1)F(0) ATP synthase produces ATP from ADP in the presence of a proton or sodium gradient. F-type ATPases consist of two structural domains, F(1) containing the extramembraneous catalytic core and F(0) containing the membrane proton channel, linked together by a central stalk and a peripheral stalk. During catalysis, ATP synthesis in the catalytic domain of F(1) is coupled via a rotary mechanism of the central stalk subunits to proton translocation. In terms of biological role, key component of the F(0) channel; it plays a direct role in translocation across the membrane. A homomeric c-ring of between 10-14 subunits forms the central stalk rotor element with the F(1) delta and epsilon subunits. This chain is ATP synthase subunit c, found in Pediococcus pentosaceus (strain ATCC 25745 / CCUG 21536 / LMG 10740 / 183-1w).